The following is a 343-amino-acid chain: N-acetyl-gamma-glutamyl-phosphate reductase (343 aa).

Cysteine 147 is a catalytic residue.

This sequence belongs to the NAGSA dehydrogenase family. Type 1 subfamily.

Its subcellular location is the cytoplasm. It carries out the reaction N-acetyl-L-glutamate 5-semialdehyde + phosphate + NADP(+) = N-acetyl-L-glutamyl 5-phosphate + NADPH + H(+). It functions in the pathway amino-acid biosynthesis; L-arginine biosynthesis; N(2)-acetyl-L-ornithine from L-glutamate: step 3/4. Functionally, catalyzes the NADPH-dependent reduction of N-acetyl-5-glutamyl phosphate to yield N-acetyl-L-glutamate 5-semialdehyde. The protein is N-acetyl-gamma-glutamyl-phosphate reductase of Listeria welshimeri serovar 6b (strain ATCC 35897 / DSM 20650 / CCUG 15529 / CIP 8149 / NCTC 11857 / SLCC 5334 / V8).